An 816-amino-acid chain; its full sequence is Mechanosensitive cation channel TMEM63B (816 aa).

The Extracellular segment spans residues 1 to 46; that stretch reads MLPYVIATLGSAGSTCKASTCSNSTKDYCYSARIRSTVLQGLPFGG. The chain crosses the membrane as a helical span at residues 47-71; the sequence is VPTVLALDFMCFLALLFVFSILRKV. Residues Cys-57 and Cys-119 are each lipidated (S-palmitoyl cysteine). Topologically, residues 72–138 are cytoplasmic; the sequence is AWDYGRLALV…KDDEIRDKCG (67 aa). Residues 139 to 171 traverse the membrane as a helical segment; sequence GDAVHYLSFQRHIIGLLVAVGVLSVGIVLPVNF. The Extracellular portion of the chain corresponds to 172-195; that stretch reads SGDLLENNAYSFGRTTIANLNSGN. Residues 196 to 220 form a helical membrane-spanning segment; that stretch reads NLLWLHTSFAFLYLLLTVYSMRRHT. Over 221 to 420 the chain is Cytoplasmic; that stretch reads SKMRYKEDDL…IYWEHLSIRG (200 aa). The segment at 224–419 is intracellular linker IL2; confers mechanosensitivity; the sequence is RYKEDDLVKR…NIYWEHLSIR (196 aa). Residues Cys-375 and Cys-391 are each lipidated (S-palmitoyl cysteine). The helical transmembrane segment at 421-450 threads the bilayer; that stretch reads FIWWIRCLVINVVLFILLFFLTTPAIIITT. Topologically, residues 451–465 are extracellular; it reads MDKFNVTKPVEYLNN. A helical transmembrane segment spans residues 466-495; sequence PIITQFFPTLLLWCFSALLPTIVYYSAFFE. Topologically, residues 496-499 are cytoplasmic; that stretch reads AHWT. Residues 500-536 traverse the membrane as a helical segment; it reads RSGENRTTMHKCYTFLIFMVLLLPSLGLSSLDVFFRW. Topologically, residues 537-559 are extracellular; it reads LFDKKFLAEAAVRFECVFLPDNG. The chain crosses the membrane as a helical span at residues 560 to 592; the sequence is AFFVNYVIASAFIGNAMDLLRIPGLLMYMIRLC. The tract at residues 560–592 is gating helix; that stretch reads AFFVNYVIASAFIGNAMDLLRIPGLLMYMIRLC. The Cytoplasmic portion of the chain corresponds to 593 to 612; it reads LARSAAERRNVKRHQAYEFQ. Residues 613-631 traverse the membrane as a helical segment; the sequence is FGAAYAWMMCVFTVVMTYS. The Extracellular segment spans residues 632 to 634; the sequence is ITC. The helical transmembrane segment at 635-659 threads the bilayer; that stretch reads PIIVPFGLMYMLLKHLVDRYNLYYA. At 660–666 the chain is on the cytoplasmic side; the sequence is YLPAKLD. A helical transmembrane segment spans residues 667–695; that stretch reads KKIHSGAVNQVVAAPILCLFWLLFFSTMR. At 696–700 the chain is on the extracellular side; the sequence is TGFLA. Residues 701 to 721 traverse the membrane as a helical segment; the sequence is PTSMFTFVVLVITIVICLCHV. Residues Cys-719 and Cys-722 are each lipidated (S-palmitoyl cysteine). At 722–816 the chain is on the cytoplasmic side; sequence CFGHFKYLSA…DSLIENEIRQ (95 aa).

The protein belongs to the CSC1 (TC 1.A.17) family. In terms of assembly, monomer. Post-translationally, palmitoylation is required for localization to the plasma membrane and stability.

It localises to the cell membrane. Its subcellular location is the lysosome membrane. It is found in the early endosome membrane. It catalyses the reaction Ca(2+)(in) = Ca(2+)(out). It carries out the reaction Mg(2+)(in) = Mg(2+)(out). The enzyme catalyses K(+)(in) = K(+)(out). The catalysed reaction is Na(+)(in) = Na(+)(out). It catalyses the reaction Cs(+)(in) = Cs(+)(out). Its function is as follows. Mechanosensitive cation channel with low conductance and high activation threshold. Osmosensitive cation channel preferentially activated by hypotonic stress. Also acts as a phospholipid scramblase in response to changes in membrane structure: upon changes in membrane curvature and thickness, alters its conformation and translocates phospholipids, thereby controlling plasma membrane lipid distribution. This is Mechanosensitive cation channel TMEM63B from Gallus gallus (Chicken).